Consider the following 255-residue polypeptide: Proliferating cell nuclear antigen 2 (255 aa).

The DNA-binding element occupies 61 to 80 (HCDRNVSLGLDLKSLGKVLK).

This sequence belongs to the PCNA family. As to quaternary structure, homotrimer. Interacts with the catalytic subunits of two DNA polymerase complexes: PolD1 in the delta complex and PolE1/DNApol-epsilon255 in the epsilon complex.

The protein localises to the nucleus. The protein resides in the chromosome. It is found in the cytoplasm. Functionally, likely to be an auxiliary protein of DNA polymerase delta complex and is probably involved in the control of DNA replication and repair by increasing the polymerase's processibility. May function independently of PCNA during DNA repair. This chain is Proliferating cell nuclear antigen 2, found in Drosophila melanogaster (Fruit fly).